Consider the following 421-residue polypeptide: Threonine--tRNA ligase editing subunit (421 aa).

Belongs to the class-II aminoacyl-tRNA synthetase family. Archaea-specific ThrRS editing domain subfamily. As to quaternary structure, probably interacts with its catalytic subunit.

The protein localises to the cytoplasm. Freestanding tRNA editing subunit of threonine--tRNA ligase, the catalytic subunit is probably AC Q9YDW0. Deacylates (edits) mischarged L-seryl-tRNA(Thr) in trans; has no activity on correctly charged L-threonyl-tRNA(Thr). Probably does not aminoacylate tRNA(Thr). Deacylates correctly charged glycyl-tRNA(Gly), but not glycyl-tRNA(Gly)(2'-dA76) (the terminal 2'-OH of tRNA adenine 76 has been dehydroxylated) nor the 2'-fluoro tRNA derivative, strongly suggesting the editing function is catalyzed by the 2'-OH of A76 of tRNA(Thr). This chain is Threonine--tRNA ligase editing subunit (thrS2), found in Aeropyrum pernix (strain ATCC 700893 / DSM 11879 / JCM 9820 / NBRC 100138 / K1).